The following is an 81-amino-acid chain: Beta-defensin 34 (81 aa).

The signal sequence occupies residues 1–20; it reads MKTFLFLFAVLFFWSQPRMH. 3 cysteine pairs are disulfide-bonded: Cys-28–Cys-55, Cys-35–Cys-49, and Cys-39–Cys-56. Positions 62–72 are enriched in polar residues; sequence CGRSKGNQSDE. The disordered stretch occupies residues 62–81; it reads CGRSKGNQSDEGSGHMGTRG.

It belongs to the beta-defensin family. As to expression, only expressed in epididymis (caput, corpus and cauda).

It is found in the secreted. Has antibacterial activity. This is Beta-defensin 34 (Defb34) from Mus musculus (Mouse).